We begin with the raw amino-acid sequence, 530 residues long: T-box transcription factor TBX21 (530 aa).

The tract at residues 1-55 (MGIVEPGCGDMLTGTEPMPSDEGRGPGADQQHRFFYPEPGAQDPTDRRAGSSLGT) is disordered. Ser52 is subject to Phosphoserine. The residue at position 55 (Thr55) is a Phosphothreonine. Phosphotyrosine is present on residues Tyr76 and Tyr117. The segment at residues 140–325 (LSNHLLWSKF…NNPFAKGFRE (186 aa)) is a DNA-binding region (T-box). Tyr219 carries the phosphotyrosine; by ABL1 modification. Residue Ser224 is modified to Phosphoserine. Phosphotyrosine; by ABL1 is present on Tyr265. Thr302 is subject to Phosphothreonine. Residue Tyr304 is modified to Phosphotyrosine; by ABL1. Lys313 is covalently cross-linked (Glycyl lysine isopeptide (Lys-Gly) (interchain with G-Cter in ubiquitin)). The disordered stretch occupies residues 444 to 530 (AGWFRPMRTL…EGQFYNYFPN (87 aa)). Residues 462-482 (SEEQGSSPSLWPEVTSLQPEP) are compositionally biased toward polar residues. Residues 498–515 (SPYPSSGDSSSPAGAPSP) are compositionally biased toward low complexity. Residue Ser508 is modified to Phosphoserine. Phosphotyrosine; by ITK is present on Tyr525.

Interacts with RUNX1 and RUNX3. Interacts with ITK. The phosphorylated form (at Tyr-525) interacts with GATA3. Interacts with ABL1. Interacts with RELA. The phosphorylated form (at Thr-302) interacts with NFATC2. Interacts with KDM6B. Interacts with SMARCA4 in a KDM6B-dependent manner. Interacts with CCTN1 and CDK9. Interacts with USP10. In terms of processing, phosphorylations at Ser-52, Tyr-76, Ser-224 and Ser-508 are regulated by mTORC1. Phosphorylation at Tyr-525 is essential for its interaction GATA3. Phosphorylation at Tyr-219, Tyr-265 and Tyr-304 enhances its transcriptional activator activity. Phosphorylation at Thr-302 is required for its interaction with NFATC2. Ubiquitinated at Lys-313, leading to its degradation by the proteasome. Ubiquitination is essential for controlling protein stability, binding to the T-box-binding element of the IFN-gamma promoter, and for interaction with NFATC2 through induction of phosphorylation at Thr-302. Deubiquitinated by USP10 leading to its stabilization. In terms of tissue distribution, T-cell specific. Expressed in regulatory T (TReg) cells.

The protein resides in the nucleus. In terms of biological role, lineage-defining transcription factor which initiates Th1 lineage development from naive Th precursor cells both by activating Th1 genetic programs and by repressing the opposing Th2 and Th17 genetic programs. Activates transcription of a set of genes important for Th1 cell function, including those encoding IFN-gamma and the chemokine receptor CXCR3. Activates IFNG and CXCR3 genes in part by recruiting chromatin remodeling complexes including KDM6B, a SMARCA4-containing SWI/SNF-complex, and an H3K4me2-methyltransferase complex to their promoters and all of these complexes serve to establish a more permissive chromatin state conducive with transcriptional activation. Can activate Th1 genes also via recruitment of Mediator complex and P-TEFb (composed of CDK9 and CCNT1/cyclin-T1) in the form of the super elongation complex (SEC) to super-enhancers and associated genes in activated Th1 cells. Inhibits the Th17 cell lineage commitment by blocking RUNX1-mediated transactivation of Th17 cell-specific transcriptinal regulator RORC. Inhibits the Th2 cell lineage commitment by suppressing the production of Th2 cytokines, such as IL-4, IL-5, and IL- 13, via repression of transcriptional regulators GATA3 and NFATC2. Protects Th1 cells from amplifying aberrant type-I IFN response in an IFN-gamma abundant microenvironment by acting as a repressor of type-I IFN transcription factors and type-I IFN- stimulated genes. Acts as a regulator of antiviral B-cell responses; controls chronic viral infection by promoting the antiviral antibody IgG2a isotype switching and via regulation of a broad antiviral gene expression program. The chain is T-box transcription factor TBX21 (Tbx21) from Mus musculus (Mouse).